A 256-amino-acid polypeptide reads, in one-letter code: Homeobox protein TGIF2LX (256 aa).

The tract at residues 1-45 (MEAAADSPAETRSRVEKDSRRVEKDSRRPKKDSPAKTQSPAQDTS) is disordered. Basic and acidic residues predominate over residues 9–34 (AETRSRVEKDSRRVEKDSRRPKKDSP). The span at 35 to 45 (AKTQSPAQDTS) shows a compositional bias: polar residues. The homeobox; TALE-type DNA-binding region spans 62–125 (EHKKKRKGYL…INARRRILPD (64 aa)). Positions 136–224 (VGHKTGKDAN…SSSPEPVSTE (89 aa)) are disordered. Over residues 166-179 (DNVQSLPLRSSPKG) the composition is skewed to polar residues. Residues 209 to 224 (VSNITSSSSPEPVSTE) show a composition bias toward low complexity.

It belongs to the TALE/TGIF homeobox family.

It is found in the nucleus. Its function is as follows. May have a transcription role in testis. This Papio hamadryas (Hamadryas baboon) protein is Homeobox protein TGIF2LX (TGIF2LX).